The sequence spans 629 residues: tRNA uridine 5-carboxymethylaminomethyl modification enzyme MnmG (629 aa).

FAD-binding positions include 13-18 (GGGHAG), valine 125, and serine 180. 273–287 (GPRYCPSIEDKVMRF) is an NAD(+) binding site. An FAD-binding site is contributed by glutamine 370.

It belongs to the MnmG family. Homodimer. Heterotetramer of two MnmE and two MnmG subunits. The cofactor is FAD.

It localises to the cytoplasm. Its function is as follows. NAD-binding protein involved in the addition of a carboxymethylaminomethyl (cmnm) group at the wobble position (U34) of certain tRNAs, forming tRNA-cmnm(5)s(2)U34. In Citrobacter koseri (strain ATCC BAA-895 / CDC 4225-83 / SGSC4696), this protein is tRNA uridine 5-carboxymethylaminomethyl modification enzyme MnmG.